Consider the following 1718-residue polypeptide: PR domain zinc finger protein 2 (1718 aa).

Positions 28–141 constitute an SET domain; sequence EEVRLFPSAV…PGEELLVWYN (114 aa). The disordered stretch occupies residues 155–335; the sequence is ERASARSKRS…TSEETLEDCS (181 aa). Positions 159-173 are enriched in basic residues; that stretch reads ARSKRSSPKSRKGKK. Residues 189–202 show a composition bias toward polar residues; sequence QLKTSEPDFTSANM. The segment covering 204–216 has biased composition (basic and acidic residues); that stretch reads DSAEGPKEDEEKP. Residues 265–297 show a composition bias toward acidic residues; that stretch reads DLGEEEEEEEEEDEEEEEDDDDDELEDEGEEEA. Positions 294 to 316 are retinoblastoma protein binding; it reads EEEASMPNENSVKEPEIRCDEKP. Residues 304-327 are compositionally biased toward basic and acidic residues; the sequence is SVKEPEIRCDEKPEDLLEEPKTTS. Residue Lys-347 forms a Glycyl lysine isopeptide (Lys-Gly) (interchain with G-Cter in SUMO2) linkage. C2H2-type zinc fingers lie at residues 360-382 and 390-412; these read FPCQ…MHIH and FKCK…ERRH. The segment at 405–457 is disordered; sequence RRRHERRHEAGLKRKPSQTLQPSEDLADGKASGENVASKDDSSPPSLGPDCLI. Ser-421 carries the phosphoserine modification. Residues 483 to 506 form a C2H2-type 3 zinc finger; the sequence is HPCKYCKKVFGTHTNMRRHQRRVH. Disordered stretches follow at residues 513-550 and 622-660; these read KGVR…EGEA and EDLP…DPMV. A Phosphoserine modification is found at Ser-643. Residues Lys-651, Lys-690, and Lys-692 each participate in a glycyl lysine isopeptide (Lys-Gly) (interchain with G-Cter in SUMO2) cross-link. Residues 729–797 form a disordered region; sequence TSSRFKRRTS…GRDERETVSP (69 aa). The span at 738 to 748 shows a compositional bias: low complexity; that stretch reads SSPPSSPQHSP. Ser-743 is modified (phosphoserine). Lys-774 is covalently cross-linked (Glycyl lysine isopeptide (Lys-Gly) (interchain with G-Cter in SUMO2)). A phosphoserine mark is found at Ser-781, Ser-785, and Ser-796. Glycyl lysine isopeptide (Lys-Gly) (interchain with G-Cter in SUMO2) cross-links involve residues Lys-866 and Lys-879. The disordered stretch occupies residues 903 to 1083; it reads VENPADGTRS…SPPPLSAISS (181 aa). Low complexity predominate over residues 951 to 969; that stretch reads LQTPSLSSGQLPPLLIPTD. 2 short sequence motifs (SH3-binding) span residues 970–979 and 985–998; these read PSSPPPCPPV and PPPP…LPAP. The span at 970-997 shows a compositional bias: pro residues; that stretch reads PSSPPPCPPVLTVATPPPPLLPTVPLPA. Residues 1018 to 1027 show a composition bias toward low complexity; sequence SPLPILSPTV. The span at 1028 to 1038 shows a compositional bias: pro residues; the sequence is SPSPSPIPPVE. Residues 1028-1052 carry the SH3-binding motif; sequence SPSPSPIPPVEPLMSAASPGPPTLS. Over residues 1042 to 1072 the composition is skewed to low complexity; the sequence is SAASPGPPTLSSSSSSSSSSSSFSSSSSSSS. 3 C2H2-type zinc fingers span residues 1134-1156, 1162-1185, and 1191-1214; these read FVCN…LSIH, FKCE…FLLH, and FVCS…RDLH. Glycyl lysine isopeptide (Lys-Gly) (interchain with G-Cter in SUMO2) cross-links involve residues Lys-1147 and Lys-1151. Residues 1244–1265 are disordered; the sequence is HMQSLPEDPLETSKEEEELNDS. Over residues 1251–1265 the composition is skewed to acidic residues; sequence DPLETSKEEEELNDS. Residues Lys-1257 and Lys-1281 each participate in a glycyl lysine isopeptide (Lys-Gly) (interchain with G-Cter in SUMO2) cross-link. The segment at 1333-1355 adopts a C2H2-type 7; atypical zinc-finger fold; that stretch reads IRCTKCGKGVDNMPELHKHILAC. The segment at 1455–1478 adopts a C2H2-type 8; atypical zinc-finger fold; that stretch reads HICPYCNREFTYIGSLNKHAAFSC. Disordered regions lie at residues 1478 to 1576, 1589 to 1612, and 1625 to 1652; these read CPKK…LRNS, GKKP…RSLH, and KSTL…VTRS. The span at 1486-1498 shows a compositional bias: basic residues; sequence PKKKVSHSSKKGG. The segment covering 1499-1511 has biased composition (low complexity); sequence HSSPASSDKNSNS. Composition is skewed to polar residues over residues 1525-1556 and 1599-1608; these read QSMQ…SKQN and HSAQLSSKTS. The span at 1635-1645 shows a compositional bias: basic and acidic residues; sequence DRFNIKSRERS.

Belongs to the class V-like SAM-binding methyltransferase superfamily. As to quaternary structure, binds to the retinoblastoma protein (RB). Interacts with GATA3. Highly expressed in retinoblastoma cell lines and in brain tumors. Also expressed in a number of other cell lines and in brain, heart, skeletal muscle, liver and spleen. Isoform 1 is expressed in testis at much higher level than isoform 3.

It is found in the nucleus. The catalysed reaction is L-lysyl(9)-[histone H3] + 3 S-adenosyl-L-methionine = N(6),N(6),N(6)-trimethyl-L-lysyl(9)-[histone H3] + 3 S-adenosyl-L-homocysteine + 3 H(+). In terms of biological role, S-adenosyl-L-methionine-dependent histone methyltransferase that specifically methylates 'Lys-9' of histone H3. May function as a DNA-binding transcription factor. Binds to the macrophage-specific TPA-responsive element (MTE) of the HMOX1 (heme oxygenase 1) gene and may act as a transcriptional activator of this gene. The sequence is that of PR domain zinc finger protein 2 (PRDM2) from Homo sapiens (Human).